Here is a 160-residue protein sequence, read N- to C-terminus: Nucleotide-binding protein TERTU_3542 (160 aa).

The protein belongs to the YajQ family.

In terms of biological role, nucleotide-binding protein. In Teredinibacter turnerae (strain ATCC 39867 / T7901), this protein is Nucleotide-binding protein TERTU_3542.